The chain runs to 74 residues: Conotoxin VnMEKL-0222 (74 aa).

The N-terminal stretch at 1-19 (MEKLTILLLVAAVLMSTQA) is a signal peptide. The propeptide occupies 20–46 (LIQEKRPKEKIKFLSKRKSIPESWWEG). Cystine bridges form between C48/C62, C55/C66, and C61/C71.

The protein belongs to the conotoxin O2 superfamily. In terms of tissue distribution, expressed by the venom duct.

It is found in the secreted. This Conus ventricosus (Mediterranean cone) protein is Conotoxin VnMEKL-0222.